The following is a 2146-amino-acid chain: Phospholipid-transporting ATPase ABCA7 (2146 aa).

Residues 22–42 form a helical membrane-spanning segment; that stretch reads PVQLLVELLWPLFLFFILVAV. Residues 43–549 are Extracellular-facing; that stretch reads RHSHPPLEHH…DVFLRVLSRS (507 aa). An intrachain disulfide couples Cys-75 to Cys-225. Asn-312 carries an N-linked (GlcNAc...) asparagine glycan. Helical transmembrane passes span 550 to 570, 593 to 613, 626 to 646, 655 to 675, 687 to 707, and 727 to 747; these read LPLFLTLAWIYSVTLTVKAVV, LGWFLSCLGPFLLSAALLVLV, GVVFLFLAAFAVATVTQSFLL, LAAACGGLAYFSLYLPYVLCV, VAASLLSPVAFGFGCESLALL, and VFSLAQVSGLLLLDAALYGLA. The ABC transporter 1 domain maps to 807–1038; sequence VSVRSLEKRF…LGSGYYLTLV (232 aa). 841–848 contributes to the ATP binding site; the sequence is GHNGAGKT. Residues 849 to 869 form a helical membrane-spanning segment; it reads TTLSILSGLFPPSGGSAFILG. Positions 1048–1066 are enriched in basic and acidic residues; sequence EKADTDMEGSVDTRQEKKN. 2 disordered regions span residues 1048–1072 and 1185–1209; these read EKADTDMEGSVDTRQEKKNGSQGSR and TALENGEPAGSAPETDQGSGPDAVG. Residues 1243–1263 form a helical membrane-spanning segment; that stretch reads IVLPALFVGLALVFSLIVPPF. The Extracellular segment spans residues 1264-1537; it reads GHYPALRLSP…ALMASSVDVL (274 aa). Cys-1345 and Cys-1359 are disulfide-bonded. The next 6 membrane-spanning stretches (helical) occupy residues 1538–1558, 1584–1604, 1621–1641, 1649–1669, 1683–1703, and 1729–1749; these read VSICVVFAMSFVPASFTLVLI, FLWDMCNYLVPACIVVLIFLA, LLLLLYGWSITPLMYPASFFF, VVLTCINLFIGINGSMATFVL, ILKQVFLIFPHFCLGRGLIDM, and VVGKNLLAMVIQGPLFLLFTL. The region spanning 1793 to 2025 is the ABC transporter 2 domain; it reads LVLRNLTKVY…FAAGHTLTLR (233 aa). Residue 1827 to 1834 coordinates ATP; the sequence is GVNGAGKT. The interval 2104–2146 is disordered; that stretch reads QGKDEDTEEQKEAGVGVDPAPGLQHPKRVSQFLDDPSTAETVL.

It belongs to the ABC transporter superfamily. ABCA family. In terms of processing, N-glycosylated. Expressed in leukocytes (at protein level). Widely expressed. Highly expressed in myelo-lymphatic tissues including peripheral leukocytes, thymus, spleen and bone marrow. Expressed in the hippocampus and the cerebellum. Isoform 2: Abundant in lymph node, spleen, thymus and trachea. Isoform 1: Strongly expressed in brain and bone marrow.

It localises to the cell membrane. Its subcellular location is the golgi apparatus membrane. The protein localises to the early endosome membrane. The protein resides in the cytoplasm. It is found in the cell projection. It localises to the ruffle membrane. Its subcellular location is the phagocytic cup. The protein localises to the endoplasmic reticulum. The catalysed reaction is ATP + H2O + phospholipidSide 1 = ADP + phosphate + phospholipidSide 2.. The enzyme catalyses a 1,2-diacyl-sn-glycero-3-phosphocholine(out) + ATP + H2O = a 1,2-diacyl-sn-glycero-3-phosphocholine(in) + ADP + phosphate + H(+). It carries out the reaction a 1,2-diacyl-sn-glycero-3-phospho-L-serine(out) + ATP + H2O = a 1,2-diacyl-sn-glycero-3-phospho-L-serine(in) + ADP + phosphate + H(+). ATPase activity is decreased by cholesterol and ceramide. ATPase activity is stimulated by phosphatidylserine, phosphatidylcholine and sphingomyelin, but phosphatidylserine is more effective. Catalyzes the translocation of specific phospholipids from the cytoplasmic to the extracellular/lumenal leaflet of membrane coupled to the hydrolysis of ATP. Transports preferentially phosphatidylserine over phosphatidylcholine. Plays a role in lipid homeostasis and macrophage-mediated phagocytosis. Binds APOA1 and may function in apolipoprotein-mediated phospholipid efflux from cells. May also mediate cholesterol efflux. May regulate cellular ceramide homeostasis during keratinocyte differentiation. Involved in lipid raft organization and CD1D localization on thymocytes and antigen-presenting cells, which plays an important role in natural killer T-cell development and activation. Plays a role in phagocytosis of apoptotic cells by macrophages. Macrophage phagocytosis is stimulated by APOA1 or APOA2, probably by stabilization of ABCA7. Also involved in phagocytic clearance of amyloid-beta by microglia cells and macrophages. Further limits amyloid-beta production by playing a role in the regulation of amyloid-beta A4 precursor protein (APP) endocytosis and/or processing. Amyloid-beta is the main component of amyloid plaques found in the brains of Alzheimer patients. The polypeptide is Phospholipid-transporting ATPase ABCA7 (Homo sapiens (Human)).